Consider the following 71-residue polypeptide: Brevinin-1HN1 (71 aa).

The signal sequence occupies residues 1 to 22 (MFTSKKPLLLLFFLGTINLSLC). Positions 23 to 45 (EQERDADEEERRDDPDERDVEVE) are excised as a propeptide. A disulfide bridge links cysteine 65 with cysteine 71.

As to expression, expressed by the skin glands.

The protein localises to the secreted. Has antimicrobial activity against Gram-positive bacteria and fungi but has weak or no activity against a range of Gram-negative bacteria except P.faecalis. Active against the Gram-positive bacteria E.faecium 091299 (MIC=19 uM), E.faecalis 981 (MIC=19 uM), S.aureus ATCC 25923 (MIC=1.2 uM), S.carnosus KHS (MIC=4.8 uM), B.licheniformis X39 (MIC=2.4 uM) and R.rhodochrous X15 (MIC=1.2 uM). Active against the Gram-negative bacterium P.faecalis X29 (MIC=4.8 uM), is virtually inactive against E.coli ATCC 25922 (MIC=150 uM) and inactive against P.aeruginosa and S.typhi. Has antifungal activity against C.albicans ATCC 2002 (MIC=2.4 uM) and is also active against the slime mold 090223 (MIC=1.2 uM). Has low hemolytic activity against human erythrocytes (LC(50)=75 uM). The chain is Brevinin-1HN1 from Odorrana hainanensis (Odor frog).